Here is a 389-residue protein sequence, read N- to C-terminus: Na(+)/H(+) antiporter NhaA (389 aa).

Helical transmembrane passes span 14-34, 59-79, 95-115, 124-144, 154-174, 177-197, 213-233, 257-277, 292-312, 328-348, and 363-383; these read AGGI…NSPL, LILW…GLEV, SLPT…YLLF, AGWA…MALL, VFLL…IALF, TDLS…LVGL, LILW…GVII, PWST…VYVG, IALG…YIAV, IAPV…IASL, and LGTL…LSKV.

It belongs to the NhaA Na(+)/H(+) (TC 2.A.33) antiporter family.

Its subcellular location is the cell inner membrane. The enzyme catalyses Na(+)(in) + 2 H(+)(out) = Na(+)(out) + 2 H(+)(in). In terms of biological role, na(+)/H(+) antiporter that extrudes sodium in exchange for external protons. This Shewanella baltica (strain OS195) protein is Na(+)/H(+) antiporter NhaA.